The sequence spans 297 residues: Acetaldehyde dehydrogenase (297 aa).

15 to 18 provides a ligand contact to NAD(+); it reads SGSI. The active-site Acyl-thioester intermediate is the cysteine 130. Residues 162 to 170 and asparagine 272 each bind NAD(+); that span reads SAGIATREN.

This sequence belongs to the acetaldehyde dehydrogenase family.

It catalyses the reaction acetaldehyde + NAD(+) + CoA = acetyl-CoA + NADH + H(+). The chain is Acetaldehyde dehydrogenase from Burkholderia pseudomallei (strain 1106a).